Here is a 97-residue protein sequence, read N- to C-terminus: Integration host factor subunit alpha (97 aa).

The tract at residues 50–71 (FGNFTLRDKPQRPGRNPKTGEE) is disordered.

This sequence belongs to the bacterial histone-like protein family. In terms of assembly, heterodimer of an alpha and a beta chain.

Functionally, this protein is one of the two subunits of integration host factor, a specific DNA-binding protein that functions in genetic recombination as well as in transcriptional and translational control. This is Integration host factor subunit alpha from Legionella pneumophila (strain Paris).